The chain runs to 260 residues: Transmembrane protein 106C (260 aa).

Gly2 carries N-myristoyl glycine lipidation. A helical transmembrane segment spans residues 85–105 (YVLLSVLLCLLASGLVFFFLF). The N-linked (GlcNAc...) asparagine glycan is linked to Asn184. A helical membrane pass occupies residues 196-216 (SYVYFYCTLPAIRVHNIVIFM).

The protein belongs to the TMEM106 family. As to quaternary structure, interacts with TMEM106B.

The protein localises to the endoplasmic reticulum membrane. Its subcellular location is the membrane. In Mus musculus (Mouse), this protein is Transmembrane protein 106C (Tmem106c).